The chain runs to 241 residues: MAGHSKWANIKHKKAAADAKRGKIWTRLIKEITVAAKLGGGDVDSNPRLRLSIDKAMDANMPKDNIQRAIQRGVGGMEGANYEEIRYEGYGLAGAAIIVDCLTDNRTRTVAEVRHAFSKHGGNMGTEGSVAFMFTHCGQFLYAPGTPEDKLMEAALEAGADDVVTNDDGSIEVTCPPNDFSAVKAALEAAGFKAEVADVVMKPQNEVSFAGDDAAKMQKLLDALENLDDVQEVFTNAVIED.

The protein belongs to the TACO1 family.

Its subcellular location is the cytoplasm. This is Probable transcriptional regulatory protein H16_A0916 from Cupriavidus necator (strain ATCC 17699 / DSM 428 / KCTC 22496 / NCIMB 10442 / H16 / Stanier 337) (Ralstonia eutropha).